The chain runs to 398 residues: Nicotinate phosphoribosyltransferase (398 aa).

Position 214 is a phosphohistidine; by autocatalysis (histidine 214).

It belongs to the NAPRTase family. Transiently phosphorylated on a His residue during the reaction cycle. Phosphorylation strongly increases the affinity for substrates and increases the rate of nicotinate D-ribonucleotide production. Dephosphorylation regenerates the low-affinity form of the enzyme, leading to product release.

The enzyme catalyses nicotinate + 5-phospho-alpha-D-ribose 1-diphosphate + ATP + H2O = nicotinate beta-D-ribonucleotide + ADP + phosphate + diphosphate. The protein operates within cofactor biosynthesis; NAD(+) biosynthesis; nicotinate D-ribonucleotide from nicotinate: step 1/1. Catalyzes the synthesis of beta-nicotinate D-ribonucleotide from nicotinate and 5-phospho-D-ribose 1-phosphate at the expense of ATP. This is Nicotinate phosphoribosyltransferase from Xanthomonas campestris pv. campestris (strain 8004).